A 512-amino-acid polypeptide reads, in one-letter code: Cytochrome P450 monooxygenase poxM (512 aa).

The helical transmembrane segment at 15-35 (LLKGATIALSFFSLYLFGLVI) threads the bilayer. C449 serves as a coordination point for heme.

This sequence belongs to the cytochrome P450 family. It depends on heme as a cofactor.

It localises to the membrane. It participates in secondary metabolite biosynthesis. Cytochrome P450 monooxygenase; part of the gene cluster that mediates the biosynthesis of oxaleimides, cytotoxic compounds containing an unusual disubstituted succinimide moiety. The first step of the pathway is provided by the HR-PKS poxF that serves in a new mode of collaborative biosynthesis with the PKS-NRPS poxE, by providing the olefin containing amino acid substrate via the synthesis of an ACP-bound dec-4-enoate. The cytochrome P450 monooxygenase poxM-catalyzed oxidation at the alpha-position creates the enzyme-bound 2-hydroxydec-4-enoyl-ACP thioester, which may be prone to spontaneous hydrolysis to yield 2-hydroxydec-4-enoic acid due to increased electrophilicity of the carbonyl. 2-hydroxydec-4-enoic acid can then be further oxidized by poxM to yield the alpha-ketoacid 2-oxodec-4-enoicacid, which is reductively aminated by the aminotransferase poxL to yield (S,E)-2-aminodec-4-enoic acid. The Hybrid PKS-NRPS synthetase poxE then performs condensation between the octaketide product of its PKS modules and the amino group of (S,E)-2-aminodec-4-enoic acid which is activated and incorporated by the adenylation domain. The resulting aminoacyl product can be cyclized by the Diels-Alderase PoxQ and reductively released by the reductive (R) domain of poxE to yield an aldehyde intermediate. The released aldehyde is then substrate for a Knoevenagel condensation by the hydrolyase poxO followed by an oxidation at the 5-position of the pyrrolidone ring. The presence of the olefin from the amino acid building block allows for migration of the substituted allyl group to occur. This allylic transposition reaction takes place in a conjugate addition, semipinacol-like fashion to yield a succinimide intermediate. Iterative two-electron oxidations of the C7 methyl of the succinimide intermediate to the carboxylic acid can be catalyzed by one of two remaining cytochrome P450 monooxygenasess poxC or poxD to yield oxaleimide A. Subsequent oxidation yields the maleimide scaffold oxaleimide I. Both oxaleimide A and oxaleimide I can undergo oxidative modifications in the decalin ring to yield the series of products oxaleimides B to H. This chain is Cytochrome P450 monooxygenase poxM, found in Penicillium oxalicum (strain 114-2 / CGMCC 5302) (Penicillium decumbens).